The following is a 198-amino-acid chain: IMP cyclohydrolase (198 aa).

This sequence belongs to the archaeal IMP cyclohydrolase family.

It carries out the reaction IMP + H2O = 5-formamido-1-(5-phospho-D-ribosyl)imidazole-4-carboxamide. Its pathway is purine metabolism; IMP biosynthesis via de novo pathway; IMP from 5-formamido-1-(5-phospho-D-ribosyl)imidazole-4-carboxamide: step 1/1. Functionally, catalyzes the cyclization of 5-formylamidoimidazole-4-carboxamide ribonucleotide to IMP. The chain is IMP cyclohydrolase from Thermococcus kodakarensis (strain ATCC BAA-918 / JCM 12380 / KOD1) (Pyrococcus kodakaraensis (strain KOD1)).